The chain runs to 619 residues: 1-deoxy-D-xylulose-5-phosphate synthase (619 aa).

Residues His63 and 104–106 (GHS) contribute to the thiamine diphosphate site. Mg(2+) is bound at residue Asp136. Residues 137-138 (GS), Asn165, Tyr272, and Glu353 each bind thiamine diphosphate. Asn165 provides a ligand contact to Mg(2+).

Belongs to the transketolase family. DXPS subfamily. As to quaternary structure, homodimer. Mg(2+) is required as a cofactor. The cofactor is thiamine diphosphate.

It carries out the reaction D-glyceraldehyde 3-phosphate + pyruvate + H(+) = 1-deoxy-D-xylulose 5-phosphate + CO2. It functions in the pathway metabolic intermediate biosynthesis; 1-deoxy-D-xylulose 5-phosphate biosynthesis; 1-deoxy-D-xylulose 5-phosphate from D-glyceraldehyde 3-phosphate and pyruvate: step 1/1. Its function is as follows. Catalyzes the acyloin condensation reaction between C atoms 2 and 3 of pyruvate and glyceraldehyde 3-phosphate to yield 1-deoxy-D-xylulose-5-phosphate (DXP). This Wolinella succinogenes (strain ATCC 29543 / DSM 1740 / CCUG 13145 / JCM 31913 / LMG 7466 / NCTC 11488 / FDC 602W) (Vibrio succinogenes) protein is 1-deoxy-D-xylulose-5-phosphate synthase.